The sequence spans 128 residues: Cytochrome c oxidase subunit 5B, mitochondrial (128 aa).

A mitochondrion-targeting transit peptide spans 1-30 (MASRLLRGVGALAAQALRRTARGAAVTRSM). N6-acetyllysine is present on residues Lys67 and Lys85. Residues Cys90, Cys92, Cys112, and Cys115 each coordinate Zn(2+). An N6-acetyllysine modification is found at Lys120.

This sequence belongs to the cytochrome c oxidase subunit 5B family. In terms of assembly, component of the cytochrome c oxidase (complex IV, CIV), a multisubunit enzyme composed of 14 subunits. The complex is composed of a catalytic core of 3 subunits MT-CO1, MT-CO2 and MT-CO3, encoded in the mitochondrial DNA, and 11 supernumerary subunits COX4I, COX5A, COX5B, COX6A, COX6B, COX6C, COX7A, COX7B, COX7C, COX8 and NDUFA4, which are encoded in the nuclear genome. The complex exists as a monomer or a dimer and forms supercomplexes (SCs) in the inner mitochondrial membrane with NADH-ubiquinone oxidoreductase (complex I, CI) and ubiquinol-cytochrome c oxidoreductase (cytochrome b-c1 complex, complex III, CIII), resulting in different assemblies (supercomplex SCI(1)III(2)IV(1) and megacomplex MCI(2)III(2)IV(2)).

It is found in the mitochondrion inner membrane. The protein operates within energy metabolism; oxidative phosphorylation. Functionally, component of the cytochrome c oxidase, the last enzyme in the mitochondrial electron transport chain which drives oxidative phosphorylation. The respiratory chain contains 3 multisubunit complexes succinate dehydrogenase (complex II, CII), ubiquinol-cytochrome c oxidoreductase (cytochrome b-c1 complex, complex III, CIII) and cytochrome c oxidase (complex IV, CIV), that cooperate to transfer electrons derived from NADH and succinate to molecular oxygen, creating an electrochemical gradient over the inner membrane that drives transmembrane transport and the ATP synthase. Cytochrome c oxidase is the component of the respiratory chain that catalyzes the reduction of oxygen to water. Electrons originating from reduced cytochrome c in the intermembrane space (IMS) are transferred via the dinuclear copper A center (CU(A)) of subunit 2 and heme A of subunit 1 to the active site in subunit 1, a binuclear center (BNC) formed by heme A3 and copper B (CU(B)). The BNC reduces molecular oxygen to 2 water molecules using 4 electrons from cytochrome c in the IMS and 4 protons from the mitochondrial matrix. The chain is Cytochrome c oxidase subunit 5B, mitochondrial (Cox5b) from Mus musculus (Mouse).